A 156-amino-acid chain; its full sequence is Small ribosomal subunit protein uS7 (156 aa).

It belongs to the universal ribosomal protein uS7 family. Part of the 30S ribosomal subunit. Contacts proteins S9 and S11.

Functionally, one of the primary rRNA binding proteins, it binds directly to 16S rRNA where it nucleates assembly of the head domain of the 30S subunit. Is located at the subunit interface close to the decoding center, probably blocks exit of the E-site tRNA. The sequence is that of Small ribosomal subunit protein uS7 from Synechocystis sp. (strain ATCC 27184 / PCC 6803 / Kazusa).